The primary structure comprises 149 residues: MQIDSIDFQILQLLNKNARIQWKEIGEKIHMTGQAVGNRIKKMEDNGIIKAYSIVVDELKMGFSFTAFVFFFMNAYMHDDLLKFIATRNEISEAHRVSGDACYLLKVTVHSQEVLNHLLNDLLKYGNYQLYLSIKEVKKHYNTSLMSDE.

In terms of domain architecture, HTH asnC-type spans 3–64 (IDSIDFQILQ…VVDELKMGFS (62 aa)). The segment at residues 22–41 (WKEIGEKIHMTGQAVGNRIK) is a DNA-binding region (H-T-H motif).

Its function is as follows. Negative regulation of glyA transcription and kinB-dependent sporulation. In Bacillus subtilis (strain 168), this protein is HTH-type transcriptional regulator LrpB (lrpB).